The chain runs to 176 residues: Acireductone dioxygenase (176 aa).

Positions 81, 83, 87, and 126 each coordinate Fe(2+). Ni(2+) contacts are provided by histidine 81, histidine 83, glutamate 87, and histidine 126.

It belongs to the acireductone dioxygenase (ARD) family. Fe(2+) serves as cofactor. The cofactor is Ni(2+).

The protein localises to the cytoplasm. It is found in the nucleus. The enzyme catalyses 1,2-dihydroxy-5-(methylsulfanyl)pent-1-en-3-one + O2 = 4-methylsulfanyl-2-oxobutanoate + formate + 2 H(+). It carries out the reaction 1,2-dihydroxy-5-(methylsulfanyl)pent-1-en-3-one + O2 = 3-(methylsulfanyl)propanoate + CO + formate + 2 H(+). It participates in amino-acid biosynthesis; L-methionine biosynthesis via salvage pathway; L-methionine from S-methyl-5-thio-alpha-D-ribose 1-phosphate: step 5/6. Its function is as follows. Catalyzes 2 different reactions between oxygen and the acireductone 1,2-dihydroxy-3-keto-5-methylthiopentene (DHK-MTPene) depending upon the metal bound in the active site. Fe-containing acireductone dioxygenase (Fe-ARD) produces formate and 2-keto-4-methylthiobutyrate (KMTB), the alpha-ketoacid precursor of methionine in the methionine recycle pathway. Ni-containing acireductone dioxygenase (Ni-ARD) produces methylthiopropionate, carbon monoxide and formate, and does not lie on the methionine recycle pathway. In Sclerotinia sclerotiorum (strain ATCC 18683 / 1980 / Ss-1) (White mold), this protein is Acireductone dioxygenase (adi1).